A 399-amino-acid polypeptide reads, in one-letter code: Probable 2-isopropylmalate synthase (399 aa).

The Pyruvate carboxyltransferase domain maps to V20–Y272. Residues D29, H210, H212, and N246 each coordinate a divalent metal cation.

It belongs to the alpha-IPM synthase/homocitrate synthase family. In terms of assembly, homodimer. It depends on a divalent metal cation as a cofactor.

The enzyme catalyses 3-methyl-2-oxobutanoate + acetyl-CoA + H2O = (2S)-2-isopropylmalate + CoA + H(+). It participates in amino-acid biosynthesis; L-leucine biosynthesis; L-leucine from 3-methyl-2-oxobutanoate: step 1/4. Functionally, catalyzes the condensation of the acetyl group of acetyl-CoA with 3-methyl-2-oxobutanoate (2-oxoisovalerate) to form 3-carboxy-3-hydroxy-4-methylpentanoate (2-isopropylmalate). The protein is Probable 2-isopropylmalate synthase (leuA) of Ignicoccus hospitalis (strain KIN4/I / DSM 18386 / JCM 14125).